The following is a 475-amino-acid chain: Ribulose bisphosphate carboxylase large chain (475 aa).

Lys-14 carries the N6,N6,N6-trimethyllysine modification. Residues Asn-123 and Thr-173 each contribute to the substrate site. Lys-175 functions as the Proton acceptor in the catalytic mechanism. Lys-177 contributes to the substrate binding site. Positions 201, 203, and 204 each coordinate Mg(2+). Lys-201 carries the N6-carboxylysine modification. The active-site Proton acceptor is His-294. Substrate-binding residues include Arg-295, His-327, and Ser-379.

The protein belongs to the RuBisCO large chain family. Type I subfamily. In terms of assembly, heterohexadecamer of 8 large chains and 8 small chains; disulfide-linked. The disulfide link is formed within the large subunit homodimers. The cofactor is Mg(2+). In terms of processing, the disulfide bond which can form in the large chain dimeric partners within the hexadecamer appears to be associated with oxidative stress and protein turnover.

It localises to the plastid. The catalysed reaction is 2 (2R)-3-phosphoglycerate + 2 H(+) = D-ribulose 1,5-bisphosphate + CO2 + H2O. It carries out the reaction D-ribulose 1,5-bisphosphate + O2 = 2-phosphoglycolate + (2R)-3-phosphoglycerate + 2 H(+). RuBisCO catalyzes two reactions: the carboxylation of D-ribulose 1,5-bisphosphate, the primary event in carbon dioxide fixation, as well as the oxidative fragmentation of the pentose substrate in the photorespiration process. Both reactions occur simultaneously and in competition at the same active site. This is Ribulose bisphosphate carboxylase large chain (rbcL) from Euglena longa (Euglenophycean alga).